Here is a 156-residue protein sequence, read N- to C-terminus: MTDSPASDAAQSSVVLTSEQIAGLLPHRYPFALVDRVIAHEPGVSATGIKNVTVNEPQFQGHFPGRPLMPGVLIVEAMAQVGGLIVTQMPDLPKGLFVFAGIDGVRFRRPVVPGDQLVIHCELLSLKRKRFGKVKAEAKVDGELVCSGELMFSLVD.

Residue His62 is part of the active site.

It belongs to the thioester dehydratase family. FabZ subfamily.

It is found in the cytoplasm. The catalysed reaction is a (3R)-hydroxyacyl-[ACP] = a (2E)-enoyl-[ACP] + H2O. Its function is as follows. Involved in unsaturated fatty acids biosynthesis. Catalyzes the dehydration of short chain beta-hydroxyacyl-ACPs and long chain saturated and unsaturated beta-hydroxyacyl-ACPs. This is 3-hydroxyacyl-[acyl-carrier-protein] dehydratase FabZ from Parasynechococcus marenigrum (strain WH8102).